The chain runs to 400 residues: Putative cytochrome P450 133B2 (400 aa).

Residue Cys348 participates in heme binding.

Belongs to the cytochrome P450 family. Heme is required as a cofactor.

This Xylella fastidiosa (strain 9a5c) protein is Putative cytochrome P450 133B2 (cyp133B2).